The sequence spans 23 residues: Protein YsaE (23 aa).

This Escherichia coli (strain K12) protein is Protein YsaE.